The following is a 92-amino-acid chain: Probable K(+)/H(+) antiporter subunit F (92 aa).

3 helical membrane-spanning segments follow: residues 4–24 (AVVW…AFAL), 36–56 (RILG…TFGI), and 62–82 (VYFE…IALA).

This sequence belongs to the CPA3 antiporters (TC 2.A.63) subunit F family. May form a hetero-oligomeric complex that consists of six subunits: PhaAB, PhaC, PhaD, PhaE, PhaF and PhaG.

It localises to the cell membrane. In terms of biological role, part of a K(+) efflux system which is required for the adaptation of R.meliloti to alkaline pH as well as for the infection process during symbiotic nodule development. This is Probable K(+)/H(+) antiporter subunit F (phaF) from Rhizobium meliloti (strain 1021) (Ensifer meliloti).